Consider the following 470-residue polypeptide: Probable G-protein coupled receptor 152 (470 aa).

Residues 1-25 are disordered; the sequence is MDTTMEADLGATGHRPRTELDDEDS. At 1 to 33 the chain is on the extracellular side; that stretch reads MDTTMEADLGATGHRPRTELDDEDSYPQGGWDT. Residues 34-54 form a helical membrane-spanning segment; it reads VFLVALLLLGLPANGLMAWLA. Over 55-65 the chain is Cytoplasmic; the sequence is GSQARHGAGTR. A helical transmembrane segment spans residues 66 to 86; the sequence is LALLLLSLALSDFLFLAAAAF. The Extracellular segment spans residues 87-105; that stretch reads QILEIRHGGHWPLGTAACR. C104 and C182 are oxidised to a cystine. The helical transmembrane segment at 106–126 threads the bilayer; it reads FYYFLWGVSYSSGLFLLAALS. Topologically, residues 127–148 are cytoplasmic; it reads LDRCLLALCPHWYPGHRPVRLP. Residues 149-169 form a helical membrane-spanning segment; the sequence is LWVCAGVWVLATLFSVPWLVF. Residues 170-194 are Extracellular-facing; sequence PEAAVWWYDLVICLDFWDSEELSLR. Residues 195–215 traverse the membrane as a helical segment; that stretch reads MLEVLGGFLPFLLLLVCHVLT. The Cytoplasmic portion of the chain corresponds to 216-257; the sequence is QATACRTCHRQQQPAACRGFARVARTILSAYVVLRLPYQLAQ. The chain crosses the membrane as a helical span at residues 258–278; it reads LLYLAFLWDVYSGYLLWEALV. Over 279–281 the chain is Extracellular; it reads YSD. The helical transmembrane segment at 282 to 302 threads the bilayer; that stretch reads YLILLNSCLSPFLCLMASADL. The Cytoplasmic segment spans residues 303–470; that stretch reads RTLLRSVLSS…PEAAPGAGPT (168 aa). The segment at 322-470 is disordered; sequence PGSFTPTEPQ…PEAAPGAGPT (149 aa). Polar residues-rich tracts occupy residues 325–335 and 348–414; these read FTPTEPQTQLD and AQSQ…NVQT. The segment covering 415–425 has biased composition (low complexity); sequence PAPAASSVPSP.

It belongs to the G-protein coupled receptor 1 family.

The protein localises to the cell membrane. Functionally, orphan receptor. This Homo sapiens (Human) protein is Probable G-protein coupled receptor 152 (GPR152).